The sequence spans 343 residues: NADP-dependent alkenal double bond reductase P2 (343 aa).

Substrate-binding residues include tyrosine 52 and tyrosine 79. NADP(+) is bound by residues 164–167, lysine 190, tyrosine 206, asparagine 230, 252–258, 282–284, and asparagine 332; these read GAVG, CGMISQY, and FVV.

This sequence belongs to the NADP-dependent oxidoreductase L4BD family. Homodimer.

It catalyses the reaction an n-alkanal + NAD(+) = an alk-2-enal + NADH + H(+). It carries out the reaction an n-alkanal + NADP(+) = an alk-2-enal + NADPH + H(+). Catalyzes the reduction of the 7-8 double bond of phenylpropanal substrates, such as p-coumaryl aldehyde and coniferyl aldehyde (in vitro). Has activity towards toxic substrates, such as 4-hydroxy-(2E)-nonenal (in vitro). May play a distinct role in plant antioxidant defense and is possibly involved in NAD(P)/NAD(P)h homeostasis. This is NADP-dependent alkenal double bond reductase P2 (P2) from Arabidopsis thaliana (Mouse-ear cress).